A 139-amino-acid polypeptide reads, in one-letter code: Protein COLD-REGULATED 15A, chloroplastic (139 aa).

Residues 1–40 constitute a chloroplast transit peptide; sequence MAMSFSGAVLTGMASSFHSGAKQSSFGAVRVGQKTQFVVV.

It belongs to the COR15 protein family. As to quaternary structure, forms homooligomers which interact with potential stromal substrates in the stroma of chloroplasts. Interacts with the galactose headgroup of the chloroplast lipid monogalactosyldiacylglycerol (MGDG).

It is found in the plastid. The protein resides in the chloroplast stroma. Its function is as follows. Exhibits cryoprotective activity toward stromal substrates (e.g. LDH and rubisco) in chloroplasts and in protoplasts and confers freezing tolerance to plants in a CBF-dependent manner. Protectant against various stresses (e.g. cold, drought and heat stress) by preventing protein aggregation (e.g. LDH) and attenuating enzyme inactivation. Influences the intrinsic curvature of the inner membrane of the chloroplast envelope, and modulates the freeze-induced lamellar-to-hexagonal II phase transitions that occur in regions where the plasma membrane is brought into close apposition with the chloroplast envelope during freeze-induced osmotic contraction. Mediates a shift in the melting curves of phospholipids-containing membranes to lower temperatures. Involved in the regulation of leaf senescence by abscisic acid (ABA) in a VNI2-dependent manner. This Arabidopsis thaliana (Mouse-ear cress) protein is Protein COLD-REGULATED 15A, chloroplastic.